Reading from the N-terminus, the 99-residue chain is DNA-binding protein Fis (99 aa).

The tract at residues 1-25 (MFEQKISSEALTTTTSIPATGQITQ) is disordered. Residues 75-94 (QTRAATMLGINRGTLRKKLK) constitute a DNA-binding region (H-T-H motif).

This sequence belongs to the transcriptional regulatory Fis family. In terms of assembly, homodimer.

In terms of biological role, activates ribosomal RNA transcription. Plays a direct role in upstream activation of rRNA promoters. This chain is DNA-binding protein Fis, found in Psychromonas ingrahamii (strain DSM 17664 / CCUG 51855 / 37).